We begin with the raw amino-acid sequence, 38 residues long: Glucagon-like peptide (38 aa).

The protein belongs to the glucagon family.

It is found in the secreted. The sequence is that of Glucagon-like peptide from Hydrolagus colliei (Spotted ratfish).